The following is a 647-amino-acid chain: Threonine--tRNA ligase (647 aa).

Residues 1-61 (MINITFPDGA…TEDGSIEIVT (61 aa)) enclose the TGS domain. The interval 242-540 (DHRKLGKELD…LIENYKGAFP (299 aa)) is catalytic. Zn(2+)-binding residues include C336, H387, and H517.

Belongs to the class-II aminoacyl-tRNA synthetase family. Homodimer. Zn(2+) serves as cofactor.

It localises to the cytoplasm. It catalyses the reaction tRNA(Thr) + L-threonine + ATP = L-threonyl-tRNA(Thr) + AMP + diphosphate + H(+). Its function is as follows. Catalyzes the attachment of threonine to tRNA(Thr) in a two-step reaction: L-threonine is first activated by ATP to form Thr-AMP and then transferred to the acceptor end of tRNA(Thr). Also edits incorrectly charged L-seryl-tRNA(Thr). The chain is Threonine--tRNA ligase from Streptococcus pneumoniae (strain P1031).